The primary structure comprises 82 residues: Large ribosomal subunit protein bL28 (82 aa).

It belongs to the bacterial ribosomal protein bL28 family.

The protein is Large ribosomal subunit protein bL28 of Vesicomyosocius okutanii subsp. Calyptogena okutanii (strain HA).